A 450-amino-acid chain; its full sequence is Biotin carboxylase 1 (450 aa).

A Biotin carboxylation domain is found at 1-447; it reads MIKKLLIANR…NTKFLETYDV (447 aa). ATP-binding positions include Lys116, Lys158, 164–165, 200–203, and His208; these read GG and EKYI. One can recognise an ATP-grasp domain in the interval 120–318; that stretch reads RETMKQAGVP…LIKEQIKVAS (199 aa). Lys237 contributes to the hydrogencarbonate binding site. ATP-binding residues include Glu275 and Glu289. Mg(2+) contacts are provided by Glu275, Glu289, and Asn291. The Mn(2+) site is built by Glu275, Glu289, and Asn291. 3 residues coordinate hydrogencarbonate: Arg293, Val296, and Arg339. Residue Arg293 is part of the active site. Residue Arg339 coordinates biotin.

As to quaternary structure, acetyl-CoA carboxylase is a heterohexamer of biotin carboxyl carrier protein, biotin carboxylase and the two subunits of carboxyl transferase in a 2:2 complex. It depends on Mg(2+) as a cofactor. Mn(2+) is required as a cofactor.

It catalyses the reaction N(6)-biotinyl-L-lysyl-[protein] + hydrogencarbonate + ATP = N(6)-carboxybiotinyl-L-lysyl-[protein] + ADP + phosphate + H(+). It participates in lipid metabolism; malonyl-CoA biosynthesis; malonyl-CoA from acetyl-CoA: step 1/1. This protein is a component of the acetyl coenzyme A carboxylase complex; first, biotin carboxylase catalyzes the carboxylation of the carrier protein and then the transcarboxylase transfers the carboxyl group to form malonyl-CoA. This is Biotin carboxylase 1 (accC1) from Bacillus subtilis (strain 168).